We begin with the raw amino-acid sequence, 337 residues long: GTP 3',8-cyclase (337 aa).

One can recognise a Radical SAM core domain in the interval 17 to 243 (PFQRQYYYLR…HKSHTDGPAK (227 aa)). Arginine 26 contacts GTP. The [4Fe-4S] cluster site is built by cysteine 33 and cysteine 37. Tyrosine 39 serves as a coordination point for S-adenosyl-L-methionine. Cysteine 40 contributes to the [4Fe-4S] cluster binding site. Arginine 76 contributes to the GTP binding site. Glycine 80 contacts S-adenosyl-L-methionine. Threonine 107 lines the GTP pocket. Serine 131 contributes to the S-adenosyl-L-methionine binding site. GTP is bound at residue lysine 168. Residue methionine 202 participates in S-adenosyl-L-methionine binding. Residues cysteine 265 and cysteine 268 each coordinate [4Fe-4S] cluster. 270–272 (RLR) is a binding site for GTP. [4Fe-4S] cluster is bound at residue cysteine 282.

It belongs to the radical SAM superfamily. MoaA family. As to quaternary structure, monomer and homodimer. It depends on [4Fe-4S] cluster as a cofactor.

It carries out the reaction GTP + AH2 + S-adenosyl-L-methionine = (8S)-3',8-cyclo-7,8-dihydroguanosine 5'-triphosphate + 5'-deoxyadenosine + L-methionine + A + H(+). It participates in cofactor biosynthesis; molybdopterin biosynthesis. In terms of biological role, catalyzes the cyclization of GTP to (8S)-3',8-cyclo-7,8-dihydroguanosine 5'-triphosphate. The protein is GTP 3',8-cyclase of Haemophilus influenzae (strain PittEE).